Here is a 378-residue protein sequence, read N- to C-terminus: Probable pectin lyase A (378 aa).

Positions 1–18 (MKYASFLALVGFITSTSA) are cleaved as a signal peptide. Disulfide bonds link cysteine 81–cysteine 100 and cysteine 90–cysteine 224. Residue arginine 254 is part of the active site. Residues cysteine 321 and cysteine 329 are joined by a disulfide bond.

The protein belongs to the polysaccharide lyase 1 family.

The protein resides in the secreted. It catalyses the reaction Eliminative cleavage of (1-&gt;4)-alpha-D-galacturonan methyl ester to give oligosaccharides with 4-deoxy-6-O-methyl-alpha-D-galact-4-enuronosyl groups at their non-reducing ends.. In terms of biological role, pectinolytic enzymes consist of four classes of enzymes: pectin lyase, polygalacturonase, pectin methylesterase and rhamnogalacturonase. Among pectinolytic enzymes, pectin lyase is the most important in depolymerization of pectin, since it cleaves internal glycosidic bonds of highly methylated pectins. The chain is Probable pectin lyase A (pelA) from Aspergillus clavatus (strain ATCC 1007 / CBS 513.65 / DSM 816 / NCTC 3887 / NRRL 1 / QM 1276 / 107).